The following is a 169-amino-acid chain: Probable chorismate pyruvate-lyase (169 aa).

Residues R71, I110, and E150 each coordinate substrate.

This sequence belongs to the UbiC family.

The protein localises to the cytoplasm. The catalysed reaction is chorismate = 4-hydroxybenzoate + pyruvate. It participates in cofactor biosynthesis; ubiquinone biosynthesis. In terms of biological role, removes the pyruvyl group from chorismate, with concomitant aromatization of the ring, to provide 4-hydroxybenzoate (4HB) for the ubiquinone pathway. The sequence is that of Probable chorismate pyruvate-lyase from Acinetobacter baumannii (strain ATCC 17978 / DSM 105126 / CIP 53.77 / LMG 1025 / NCDC KC755 / 5377).